A 502-amino-acid chain; its full sequence is Cytochrome P450 monooxygenase prhN (502 aa).

The chain crosses the membrane as a helical span at residues 14–30 (SGALLIVGILLLRWALW). Residue Asn165 is glycosylated (N-linked (GlcNAc...) asparagine). Residue Cys443 coordinates heme. A glycan (N-linked (GlcNAc...) asparagine) is linked at Asn474.

It belongs to the cytochrome P450 family. Heme is required as a cofactor.

It is found in the membrane. It participates in secondary metabolite biosynthesis; terpenoid biosynthesis. Cytochrome P450 monooxygenase; part of the gene cluster that mediates the biosynthesis of paraherquonin, a meroterpenoid with a unique, highly congested hexacyclic molecular architecture. The first step of the pathway is the synthesis of 3,5-dimethylorsellinic acid (DMOA) by the polyketide synthase prhL. Synthesis of DMOA is followed by farnesylation by the prenyltransferase prhE, methylesterification by the methyl-transferase prhM, epoxidation of the prenyl chain by the flavin-dependent monooxygenase prhF, and cyclization of the farnesyl moiety by the terpene cyclase prhH, to yield the tetracyclic intermediate, protoaustinoid A. The short chain dehydrogenase prhI then oxidizes the C-3 alcohol group of the terpene cyclase product to transform protoaustinoid A into protoaustinoid B. The FAD-binding monooxygenase prhJ catalyzes the oxidation of protoaustinoid B into preaustinoid A which is further oxidized into preaustinoid A1 by FAD-binding monooxygenase phrK. Finally, prhA leads to berkeleydione via the berkeleyone B intermediate. PrhA is a multifunctional dioxygenase that first desaturates at C5-C6 to form berkeleyone B, followed by rearrangement of the A/B-ring to form the cycloheptadiene moiety in berkeleydione. Berkeleydione serves as the key intermediate for the biosynthesis of paraherquonin as well as many other meroterpenoids. The cytochrome P450 monooxygenases prhB, prhD, and prhN, as well as the isomerase prhC, are probably involved in the late stage of paraherquonin biosynthesis, after the production of berkeleydione. Especially prhC might be a multifunctional enzyme that catalyzes the D-ring expansion via intramolecular methoxy rearrangement, as well as the hydrolysis of the expanded D-ring. In Penicillium brasilianum, this protein is Cytochrome P450 monooxygenase prhN.